The chain runs to 451 residues: MQSIEDIWQETLQIVKKNMSKPSYDTWMKSTTAHSLEGNTFIISAPNNFVRDWLEKSYTQFIANILQEITGRLFDVRFIDGEQEENFEYTVIKPNPALDEDGVEIGKHMLNPRYVFDTFVIGSGNRFAHAASLAVAEAPAKAYNPLFIYGGVGLGKTHLMHAVGHYVQQHKDNAKVMYLSSEKFTNEFISSIRDNKTEEFRTKYRNVDVLLIDDIQFLAGKEGTQEEFFHTFNTLYDEQKQIIISSDRPPKEIPTLEDRLRSRFEWGLITDITPPDLETRIAILRKKAKADGLDIPNEVMLYIANQIDSNIRELEGALIRVVAYSSLVNKDITAGLAAEALKDIIPSSKSQVITISGIQEAVGEYFHVRLEDFKAKKRTKSIAFPRQIAMYLSRELTDASLPKIGDEFGGRDHTTVIHAHEKISQLLKTDQVLKNDLAEIEKNLRKAQNMF.

The tract at residues 1–72 (MQSIEDIWQE…ANILQEITGR (72 aa)) is domain I, interacts with DnaA modulators. Residues 72-108 (RLFDVRFIDGEQEENFEYTVIKPNPALDEDGVEIGKH) form a domain II region. The tract at residues 109 to 325 (MLNPRYVFDT…GALIRVVAYS (217 aa)) is domain III, AAA+ region. ATP contacts are provided by Gly-153, Gly-155, Lys-156, and Thr-157. Positions 326 to 451 (SLVNKDITAG…KNLRKAQNMF (126 aa)) are domain IV, binds dsDNA.

The protein belongs to the DnaA family. Oligomerizes as a right-handed, spiral filament on DNA at oriC.

The protein localises to the cytoplasm. Its function is as follows. Plays an essential role in the initiation and regulation of chromosomal replication. ATP-DnaA binds to the origin of replication (oriC) to initiate formation of the DNA replication initiation complex once per cell cycle. Binds the DnaA box (a 9 base pair repeat at the origin) and separates the double-stranded (ds)DNA. Forms a right-handed helical filament on oriC DNA; dsDNA binds to the exterior of the filament while single-stranded (ss)DNA is stabiized in the filament's interior. The ATP-DnaA-oriC complex binds and stabilizes one strand of the AT-rich DNA unwinding element (DUE), permitting loading of DNA polymerase. After initiation quickly degrades to an ADP-DnaA complex that is not apt for DNA replication. Binds acidic phospholipids. The sequence is that of Chromosomal replication initiator protein DnaA from Listeria monocytogenes serotype 4b (strain CLIP80459).